The chain runs to 342 residues: Tetraacyldisaccharide 4'-kinase (342 aa).

Residue 68 to 75 (TVGGTGKT) coordinates ATP.

Belongs to the LpxK family.

The catalysed reaction is a lipid A disaccharide + ATP = a lipid IVA + ADP + H(+). Its pathway is glycolipid biosynthesis; lipid IV(A) biosynthesis; lipid IV(A) from (3R)-3-hydroxytetradecanoyl-[acyl-carrier-protein] and UDP-N-acetyl-alpha-D-glucosamine: step 6/6. In terms of biological role, transfers the gamma-phosphate of ATP to the 4'-position of a tetraacyldisaccharide 1-phosphate intermediate (termed DS-1-P) to form tetraacyldisaccharide 1,4'-bis-phosphate (lipid IVA). The sequence is that of Tetraacyldisaccharide 4'-kinase from Burkholderia multivorans (strain ATCC 17616 / 249).